A 142-amino-acid chain; its full sequence is Transcription antitermination protein NusB (142 aa).

It belongs to the NusB family.

Its function is as follows. Involved in transcription antitermination. Required for transcription of ribosomal RNA (rRNA) genes. Binds specifically to the boxA antiterminator sequence of the ribosomal RNA (rrn) operons. This Borrelia garinii subsp. bavariensis (strain ATCC BAA-2496 / DSM 23469 / PBi) (Borreliella bavariensis) protein is Transcription antitermination protein NusB.